Reading from the N-terminus, the 663-residue chain is Zinc finger protein GLI2 (663 aa).

A disordered region spans residues 159–186 (ISSNSNCISDSSQSKQSSESAVSSTVNP). Residues 160–182 (SSNSNCISDSSQSKQSSESAVSS) show a composition bias toward low complexity. 5 consecutive C2H2-type zinc fingers follow at residues 234 to 259 (TNCH…NNDH), 267 to 294 (FVCR…MRRH), 300 to 324 (HKCT…LRSH), 330 to 355 (YVCE…NRTH), and 361 to 386 (YVCK…KTVH). 4 disordered regions span residues 374–440 (DPSS…MEDC), 452–481 (VMCQ…DSGV), 544–578 (CSWV…SRTL), and 619–663 (SGIS…DIKL). The span at 386-402 (HGPDAHVTKKQRNDVHP) shows a compositional bias: basic and acidic residues. The segment covering 456–473 (SSPGGQSSCSSEPSPLGS) has biased composition (low complexity). Polar residues-rich tracts occupy residues 563 to 578 (GNGS…SRTL) and 619 to 647 (SGIS…SSAD).

Belongs to the GLI C2H2-type zinc-finger protein family.

Its subcellular location is the nucleus. The protein resides in the cytoplasm. It localises to the cell projection. The protein localises to the cilium. In terms of biological role, functions as a transcription regulator in the hedgehog (Hh) pathway. Functions as a transcriptional activator. May also function as transcriptional repressor. Binds to the DNA sequence 5'-GAACCACCCA-3'. Is involved in the smoothened (SHH) signaling pathway. Required for normal skeleton development. The polypeptide is Zinc finger protein GLI2 (Gallus gallus (Chicken)).